The primary structure comprises 222 residues: Eukaryotic translation initiation factor 3 subunit K (222 aa).

The PCI domain maps to 46–208; it reads YDLEANLAVL…KIKTKNITEK (163 aa).

The protein belongs to the eIF-3 subunit K family. As to quaternary structure, component of the eukaryotic translation initiation factor 3 (eIF-3) complex. The eIF-3 complex interacts with pix.

It is found in the cytoplasm. In terms of biological role, component of the eukaryotic translation initiation factor 3 (eIF-3) complex, which is involved in protein synthesis of a specialized repertoire of mRNAs and, together with other initiation factors, stimulates binding of mRNA and methionyl-tRNAi to the 40S ribosome. The eIF-3 complex specifically targets and initiates translation of a subset of mRNAs involved in cell proliferation. The chain is Eukaryotic translation initiation factor 3 subunit K from Drosophila ananassae (Fruit fly).